The following is a 91-amino-acid chain: uncharacterized protein (91 aa).

The helical transmembrane segment at Phe-12–His-34 threads the bilayer.

The protein resides in the membrane. This is an uncharacterized protein from Saccharomyces cerevisiae (strain ATCC 204508 / S288c) (Baker's yeast).